A 556-amino-acid chain; its full sequence is Arginine--tRNA ligase (556 aa).

The 'HIGH' region motif lies at 129–139 (ANPTGPLHVGH).

It belongs to the class-I aminoacyl-tRNA synthetase family. Monomer.

The protein localises to the cytoplasm. It carries out the reaction tRNA(Arg) + L-arginine + ATP = L-arginyl-tRNA(Arg) + AMP + diphosphate. The chain is Arginine--tRNA ligase from Desulfosudis oleivorans (strain DSM 6200 / JCM 39069 / Hxd3) (Desulfococcus oleovorans).